We begin with the raw amino-acid sequence, 226 residues long: 7-cyano-7-deazaguanine synthase (226 aa).

10–20 (LSGGLDSATAA) contacts ATP. Zn(2+) contacts are provided by Cys191, Cys199, Cys202, and Cys205.

Belongs to the QueC family. Requires Zn(2+) as cofactor.

The catalysed reaction is 7-carboxy-7-deazaguanine + NH4(+) + ATP = 7-cyano-7-deazaguanine + ADP + phosphate + H2O + H(+). It participates in purine metabolism; 7-cyano-7-deazaguanine biosynthesis. Catalyzes the ATP-dependent conversion of 7-carboxy-7-deazaguanine (CDG) to 7-cyano-7-deazaguanine (preQ(0)). This Synechococcus sp. (strain CC9605) protein is 7-cyano-7-deazaguanine synthase.